The following is a 658-amino-acid chain: NADPH-dependent diflavin oxidoreductase 1 (658 aa).

The Flavodoxin-like domain maps to L16–W160. Residues T22–S27, S69–G72, L107–C116, and D142 contribute to the FMN site. An FAD-binding FR-type domain is found at Q215–P502. FAD contacts are provided by residues R400, R430–S433, and G474–T477. Residues T514, S574 to R575, and K580 to Q584 contribute to the NADP(+) site. W657 contacts FAD.

This sequence belongs to the NADPH-dependent diflavin oxidoreductase NDOR1 family. In the N-terminal section; belongs to the flavodoxin family. It in the C-terminal section; belongs to the flavoprotein pyridine nucleotide cytochrome reductase family. As to quaternary structure, interacts with DRE2; as part of the cytosolic iron-sulfur (Fe-S) protein assembly (CIA) machinery. The cofactor is FAD. FMN is required as a cofactor.

Its subcellular location is the cytoplasm. The protein localises to the mitochondrion. It catalyses the reaction 2 oxidized [2Fe-2S]-[protein] + NADPH = 2 reduced [2Fe-2S]-[protein] + NADP(+) + H(+). Its function is as follows. NADPH-dependent reductase which is a central component of the cytosolic iron-sulfur (Fe-S) protein assembly (CIA) machinery. Transfers electrons from NADPH via its FAD and FMN prosthetic groups to the [2Fe-2S] cluster of DRE2, another key component of the CIA machinery. In turn, this reduced cluster provides electrons for assembly of cytosolic iron-sulfur cluster proteins. Positively controls H(2)O(2)-induced cell death. The chain is NADPH-dependent diflavin oxidoreductase 1 from Mycosarcoma maydis (Corn smut fungus).